The sequence spans 568 residues: 2-succinyl-5-enolpyruvyl-6-hydroxy-3-cyclohexene-1-carboxylate synthase (568 aa).

The protein belongs to the TPP enzyme family. MenD subfamily. As to quaternary structure, homodimer. Mg(2+) is required as a cofactor. The cofactor is Mn(2+). It depends on thiamine diphosphate as a cofactor.

It carries out the reaction isochorismate + 2-oxoglutarate + H(+) = 5-enolpyruvoyl-6-hydroxy-2-succinyl-cyclohex-3-ene-1-carboxylate + CO2. It functions in the pathway quinol/quinone metabolism; 1,4-dihydroxy-2-naphthoate biosynthesis; 1,4-dihydroxy-2-naphthoate from chorismate: step 2/7. The protein operates within quinol/quinone metabolism; menaquinone biosynthesis. Its function is as follows. Catalyzes the thiamine diphosphate-dependent decarboxylation of 2-oxoglutarate and the subsequent addition of the resulting succinic semialdehyde-thiamine pyrophosphate anion to isochorismate to yield 2-succinyl-5-enolpyruvyl-6-hydroxy-3-cyclohexene-1-carboxylate (SEPHCHC). This chain is 2-succinyl-5-enolpyruvyl-6-hydroxy-3-cyclohexene-1-carboxylate synthase, found in Histophilus somni (strain 129Pt) (Haemophilus somnus).